Here is a 249-residue protein sequence, read N- to C-terminus: Sugar fermentation stimulation protein homolog (249 aa).

It belongs to the SfsA family.

The chain is Sugar fermentation stimulation protein homolog from Rhizobium rhizogenes (strain K84 / ATCC BAA-868) (Agrobacterium radiobacter).